The sequence spans 228 residues: Uracil-DNA glycosylase (228 aa).

The active-site Proton acceptor is aspartate 64.

Belongs to the uracil-DNA glycosylase (UDG) superfamily. UNG family.

It localises to the cytoplasm. The enzyme catalyses Hydrolyzes single-stranded DNA or mismatched double-stranded DNA and polynucleotides, releasing free uracil.. Excises uracil residues from the DNA which can arise as a result of misincorporation of dUMP residues by DNA polymerase or due to deamination of cytosine. The sequence is that of Uracil-DNA glycosylase from Pectobacterium atrosepticum (strain SCRI 1043 / ATCC BAA-672) (Erwinia carotovora subsp. atroseptica).